The primary structure comprises 266 residues: Diphthine synthase (266 aa).

Residues leucine 9, aspartate 84, valine 87, 112–113, leucine 169, alanine 210, and histidine 235 each bind S-adenosyl-L-methionine; that span reads SI.

This sequence belongs to the diphthine synthase family. In terms of assembly, homodimer.

The enzyme catalyses 2-[(3S)-amino-3-carboxypropyl]-L-histidyl-[translation elongation factor 2] + 3 S-adenosyl-L-methionine = diphthine-[translation elongation factor 2] + 3 S-adenosyl-L-homocysteine + 3 H(+). It participates in protein modification; peptidyl-diphthamide biosynthesis. In terms of biological role, S-adenosyl-L-methionine-dependent methyltransferase that catalyzes the trimethylation of the amino group of the modified target histidine residue in translation elongation factor 2 (EF-2), to form an intermediate called diphthine. The three successive methylation reactions represent the second step of diphthamide biosynthesis. This Methanosarcina barkeri (strain Fusaro / DSM 804) protein is Diphthine synthase.